Here is a 330-residue protein sequence, read N- to C-terminus: Nuclear apoptosis-inducing factor 1 (330 aa).

Residues 1–74 (MASPPAPPAK…CHRELPEVKK (74 aa)) are required for nuclear localization and apoptosis-inducing activity. 3 disordered regions span residues 92 to 117 (AAME…TGAT), 147 to 175 (CGAG…AAPS), and 309 to 330 (NTPS…GIIQ). Residues 95 to 108 (EGGGESQNGGGAGT) show a composition bias toward gly residues.

The protein belongs to the NAIF1 family.

Its subcellular location is the nucleus. In terms of biological role, induces apoptosis. The chain is Nuclear apoptosis-inducing factor 1 (NAIF1) from Gallus gallus (Chicken).